A 492-amino-acid chain; its full sequence is Protein nucleotidyltransferase YdiU (492 aa).

The ATP site is built by G88, G90, R91, K111, D123, G124, R174, and R181. D250 serves as the catalytic Proton acceptor. Mg(2+) is bound by residues N251 and D260. D260 lines the ATP pocket.

Belongs to the SELO family. The cofactor is Mg(2+). Requires Mn(2+) as cofactor.

The enzyme catalyses L-seryl-[protein] + ATP = 3-O-(5'-adenylyl)-L-seryl-[protein] + diphosphate. It carries out the reaction L-threonyl-[protein] + ATP = 3-O-(5'-adenylyl)-L-threonyl-[protein] + diphosphate. It catalyses the reaction L-tyrosyl-[protein] + ATP = O-(5'-adenylyl)-L-tyrosyl-[protein] + diphosphate. The catalysed reaction is L-histidyl-[protein] + UTP = N(tele)-(5'-uridylyl)-L-histidyl-[protein] + diphosphate. The enzyme catalyses L-seryl-[protein] + UTP = O-(5'-uridylyl)-L-seryl-[protein] + diphosphate. It carries out the reaction L-tyrosyl-[protein] + UTP = O-(5'-uridylyl)-L-tyrosyl-[protein] + diphosphate. Functionally, nucleotidyltransferase involved in the post-translational modification of proteins. It can catalyze the addition of adenosine monophosphate (AMP) or uridine monophosphate (UMP) to a protein, resulting in modifications known as AMPylation and UMPylation. This is Protein nucleotidyltransferase YdiU from Rhodopseudomonas palustris (strain ATCC BAA-98 / CGA009).